Reading from the N-terminus, the 137-residue chain is Ribosome-binding factor A (137 aa).

This sequence belongs to the RbfA family. As to quaternary structure, monomer. Binds 30S ribosomal subunits, but not 50S ribosomal subunits or 70S ribosomes.

The protein localises to the cytoplasm. One of several proteins that assist in the late maturation steps of the functional core of the 30S ribosomal subunit. Associates with free 30S ribosomal subunits (but not with 30S subunits that are part of 70S ribosomes or polysomes). Required for efficient processing of 16S rRNA. May interact with the 5'-terminal helix region of 16S rRNA. The chain is Ribosome-binding factor A from Cereibacter sphaeroides (strain ATCC 17029 / ATH 2.4.9) (Rhodobacter sphaeroides).